An 85-amino-acid chain; its full sequence is U4-theraphotoxin-Hhn1a (85 aa).

The signal sequence occupies residues 1–22 (MKVTLIAILTCAAVLVLHTTAA). Residues 23 to 48 (EELEAESQLMKVGMPDTELAAVDEER) constitute a propeptide that is removed on maturation. Intrachain disulfides connect cysteine 52–cysteine 66, cysteine 56–cysteine 77, and cysteine 71–cysteine 82.

The protein belongs to the neurotoxin 12 (Hwtx-2) family. 02 (Hwtx-2) subfamily. In terms of assembly, monomer. Expressed by the venom gland.

Its subcellular location is the secreted. Functionally, neurotoxin active on both insects and mammals. This chain is U4-theraphotoxin-Hhn1a, found in Cyriopagopus hainanus (Chinese bird spider).